The chain runs to 274 residues: Homeobox-leucine zipper protein HAT9 (274 aa).

Residues 64–74 are compositionally biased toward low complexity; sequence SSHSGVSSFSS. Positions 64–96 are disordered; sequence SSHSGVSSFSSGRVVKRERDGGEESPEEEEMTE. The homeobox DNA-binding region spans 110-169; that stretch reads SARKKLRLTKQQSALLEESFKDHSTLNPKQKQVLARQLNLRPRQVEVWFQNRRARTKLKQ. A leucine-zipper region spans residues 177–198; the sequence is LKKCCETLADENIRLQKEIQEL.

Belongs to the HD-ZIP homeobox family. Class II subfamily.

It localises to the nucleus. Functionally, probable transcription factor. In Arabidopsis thaliana (Mouse-ear cress), this protein is Homeobox-leucine zipper protein HAT9 (HAT9).